Here is an 868-residue protein sequence, read N- to C-terminus: Leucine--tRNA ligase (868 aa).

Residues proline 42–histidine 52 carry the 'HIGH' region motif. The short motif at lysine 627–serine 631 is the 'KMSKS' region element. Lysine 630 serves as a coordination point for ATP.

This sequence belongs to the class-I aminoacyl-tRNA synthetase family.

It localises to the cytoplasm. It catalyses the reaction tRNA(Leu) + L-leucine + ATP = L-leucyl-tRNA(Leu) + AMP + diphosphate. The chain is Leucine--tRNA ligase from Pseudomonas putida (strain ATCC 700007 / DSM 6899 / JCM 31910 / BCRC 17059 / LMG 24140 / F1).